A 162-amino-acid polypeptide reads, in one-letter code: Shikimate kinase (162 aa).

11–16 is a binding site for ATP; sequence GSGKSS. Ser-15 contacts Mg(2+). 3 residues coordinate substrate: Asp-33, Arg-57, and Gly-80. Arg-116 contributes to the ATP binding site. Arg-132 contributes to the substrate binding site.

This sequence belongs to the shikimate kinase family. Monomer. The cofactor is Mg(2+).

The protein resides in the cytoplasm. It carries out the reaction shikimate + ATP = 3-phosphoshikimate + ADP + H(+). It functions in the pathway metabolic intermediate biosynthesis; chorismate biosynthesis; chorismate from D-erythrose 4-phosphate and phosphoenolpyruvate: step 5/7. Functionally, catalyzes the specific phosphorylation of the 3-hydroxyl group of shikimic acid using ATP as a cosubstrate. The polypeptide is Shikimate kinase (Helicobacter pylori (strain HPAG1)).